The following is a 130-amino-acid chain: Guanyl-specific ribonuclease T1 (130 aa).

An N-terminal signal peptide occupies residues 1–26; that stretch reads MMYSKLLTLTTLLLPTALALPSLVER. 2 cysteine pairs are disulfide-bonded: C28/C36 and C32/C129. H66 is an active-site residue. E84 (proton acceptor) is an active-site residue. The active-site Proton donor is the H118.

This sequence belongs to the ribonuclease N1/T1 family. As to quaternary structure, monomer.

It catalyses the reaction [RNA] containing guanosine + H2O = an [RNA fragment]-3'-guanosine-3'-phosphate + a 5'-hydroxy-ribonucleotide-3'-[RNA fragment].. This chain is Guanyl-specific ribonuclease T1 (rntA), found in Aspergillus oryzae (strain ATCC 42149 / RIB 40) (Yellow koji mold).